The sequence spans 204 residues: Small ribosomal subunit protein uS4 (204 aa).

Positions 1 to 49 (MSKRKSAKYKLDRRMGENIWGRPNSPVNKRSYGPGQHGQRRKGKTSDFG) are disordered. Residues 94 to 154 (QRLDMVVYRA…NKAKEMALVI (61 aa)) enclose the S4 RNA-binding domain.

Belongs to the universal ribosomal protein uS4 family. In terms of assembly, part of the 30S ribosomal subunit. Contacts protein S5. The interaction surface between S4 and S5 is involved in control of translational fidelity.

Its function is as follows. One of the primary rRNA binding proteins, it binds directly to 16S rRNA where it nucleates assembly of the body of the 30S subunit. Functionally, with S5 and S12 plays an important role in translational accuracy. The protein is Small ribosomal subunit protein uS4 of Erythrobacter litoralis (strain HTCC2594).